The sequence spans 188 residues: V-type ATP synthase subunit E (188 aa).

It belongs to the V-ATPase E subunit family.

Functionally, produces ATP from ADP in the presence of a proton gradient across the membrane. This Thermus thermophilus (strain ATCC BAA-163 / DSM 7039 / HB27) protein is V-type ATP synthase subunit E.